A 250-amino-acid chain; its full sequence is tRNA (guanine-N(1)-)-methyltransferase (250 aa).

Residues Gly-113 and 133 to 138 contribute to the S-adenosyl-L-methionine site; that span reads IGDYVL.

It belongs to the RNA methyltransferase TrmD family. Homodimer.

It is found in the cytoplasm. It catalyses the reaction guanosine(37) in tRNA + S-adenosyl-L-methionine = N(1)-methylguanosine(37) in tRNA + S-adenosyl-L-homocysteine + H(+). Specifically methylates guanosine-37 in various tRNAs. The sequence is that of tRNA (guanine-N(1)-)-methyltransferase from Photorhabdus laumondii subsp. laumondii (strain DSM 15139 / CIP 105565 / TT01) (Photorhabdus luminescens subsp. laumondii).